We begin with the raw amino-acid sequence, 41 residues long: Photosystem II reaction center protein L (41 aa).

The chain crosses the membrane as a helical span at residues 20-40 (SLYWGLLLIFVLAVPFSNYFF).

Belongs to the PsbL family. In terms of assembly, PSII is composed of 1 copy each of membrane proteins PsbA, PsbB, PsbC, PsbD, PsbE, PsbF, PsbH, PsbI, PsbJ, PsbK, PsbL, PsbM, PsbT, PsbX, PsbY, PsbZ, Psb30/Ycf12, at least 3 peripheral proteins of the oxygen-evolving complex and a large number of cofactors. It forms dimeric complexes.

The protein localises to the plastid. The protein resides in the chloroplast thylakoid membrane. In terms of biological role, one of the components of the core complex of photosystem II (PSII). PSII is a light-driven water:plastoquinone oxidoreductase that uses light energy to abstract electrons from H(2)O, generating O(2) and a proton gradient subsequently used for ATP formation. It consists of a core antenna complex that captures photons, and an electron transfer chain that converts photonic excitation into a charge separation. This subunit is found at the monomer-monomer interface and is required for correct PSII assembly and/or dimerization. This is Photosystem II reaction center protein L from Pinus koraiensis (Korean pine).